Reading from the N-terminus, the 351-residue chain is Putative NBPF family member NBPF5 (351 aa).

Coiled-coil stretches lie at residues 10 to 43 (SERA…EKFL) and 69 to 115 (DSVL…KLRE). Residues 157-285 (HLVHKLSPEN…VPPRHHDKSN (129 aa)) form a disordered region. Residues 165–179 (ENDEDEDEDEDDKDE) show a composition bias toward acidic residues. Positions 174 to 261 (EDDKDEEVEK…EEEEALNIPP (88 aa)) constitute an Olduvai domain. Residues 192–202 (EVQKTEEKEVP) are compositionally biased toward basic and acidic residues. The span at 214-226 (SNSHNPSNSNQPH) shows a compositional bias: low complexity. 2 stretches are compositionally biased toward basic and acidic residues: residues 232 to 251 (TFKE…HPHD) and 264 to 273 (QNDHEEEEGK).

Belongs to the NBPF family. As to expression, expressed in brain and medulla.

The protein resides in the cytoplasm. The protein is Putative NBPF family member NBPF5 of Homo sapiens (Human).